The following is a 218-amino-acid chain: MNVQIKICGLTDPDRAAECFELGADAVGLVFYPPSPRFVIDDLALEICQALPKSAPKVGVFVNDTYEFIMNKAERCGITMAQLHGHESQELADRLEKAGIGVIKAFFANRSPDFKAMTEYSAQACLVECAGEKLPGGNAKAWAWRTARGISERMPLALAGGLDPENVSQAILDAMPDALDVSSGVEASPGVKDMDKVKRFIQNATQTGIDYQPRKVFS.

It belongs to the TrpF family.

It catalyses the reaction N-(5-phospho-beta-D-ribosyl)anthranilate = 1-(2-carboxyphenylamino)-1-deoxy-D-ribulose 5-phosphate. It functions in the pathway amino-acid biosynthesis; L-tryptophan biosynthesis; L-tryptophan from chorismate: step 3/5. This is N-(5'-phosphoribosyl)anthranilate isomerase from Desulfatibacillum aliphaticivorans.